The chain runs to 275 residues: Ceramide synthase (275 aa).

One can recognise a TLC domain in the interval 34-261 (ADAVIVSARL…ICRGACRLFR (228 aa)). The next 4 helical transmembrane spans lie at 130–150 (FLMV…SVVW), 159–179 (LGCM…KILI), 194–214 (ALML…LYWA), and 232–252 (AHVN…FFLI).

Each isoform has a distinct expression pattern. Isoform 1 is highly expressed in brain. Isoform 2 is expressed at low levels, if any, in all analyzed tissues, with slightly higher levels in testis. Isoform 3 is expressed at very high levels in testis and, at lower levels, in white adipose tissue. In epididymal fat, isoform 3 is expressed at higher levels in obese mice compared with lean mice. By contrast, isoform 1 and 2 levels are significantly lower in obese mice compared with lean mice.

It is found in the golgi apparatus membrane. The protein localises to the endoplasmic reticulum membrane. The catalysed reaction is sphing-4-enine + octadecanoyl-CoA = N-octadecanoylsphing-4-enine + CoA + H(+). It carries out the reaction eicosanoyl-CoA + sphing-4-enine = N-eicosanoyl-sphing-4-enine + CoA + H(+). It catalyses the reaction sphing-4-enine + hexadecanoyl-CoA = N-hexadecanoylsphing-4-enine + CoA + H(+). Involved in ceramide synthesis. In vitro, isoform 3 stimulates the production of C16-, C18- and C20-ceramides, isoform 1 slightly increases the levels of C18- and C20-ceramides, while isoform 2 exhibits only minimal activity. May interfere with adipogenesis by stimulating ceramide synthesis. The sequence is that of Ceramide synthase (Tlcd3b) from Mus musculus (Mouse).